A 568-amino-acid chain; its full sequence is Proline--tRNA ligase (568 aa).

This sequence belongs to the class-II aminoacyl-tRNA synthetase family. ProS type 1 subfamily. In terms of assembly, homodimer.

It is found in the cytoplasm. The enzyme catalyses tRNA(Pro) + L-proline + ATP = L-prolyl-tRNA(Pro) + AMP + diphosphate. In terms of biological role, catalyzes the attachment of proline to tRNA(Pro) in a two-step reaction: proline is first activated by ATP to form Pro-AMP and then transferred to the acceptor end of tRNA(Pro). As ProRS can inadvertently accommodate and process non-cognate amino acids such as alanine and cysteine, to avoid such errors it has two additional distinct editing activities against alanine. One activity is designated as 'pretransfer' editing and involves the tRNA(Pro)-independent hydrolysis of activated Ala-AMP. The other activity is designated 'posttransfer' editing and involves deacylation of mischarged Ala-tRNA(Pro). The misacylated Cys-tRNA(Pro) is not edited by ProRS. This chain is Proline--tRNA ligase, found in Macrococcus caseolyticus (strain JCSC5402) (Macrococcoides caseolyticum).